The following is a 184-amino-acid chain: GTP cyclohydrolase 1 (184 aa).

Zn(2+)-binding residues include C75, H78, and C146.

It belongs to the GTP cyclohydrolase I family. In terms of assembly, homomer.

It catalyses the reaction GTP + H2O = 7,8-dihydroneopterin 3'-triphosphate + formate + H(+). The protein operates within cofactor biosynthesis; 7,8-dihydroneopterin triphosphate biosynthesis; 7,8-dihydroneopterin triphosphate from GTP: step 1/1. The chain is GTP cyclohydrolase 1 from Coxiella burnetii (strain Dugway 5J108-111).